We begin with the raw amino-acid sequence, 510 residues long: GTPase Der (510 aa).

2 consecutive EngA-type G domains span residues 3–167 (LKLA…GPEA) and 230–405 (IRLA…KDWT). Residues 9 to 16 (GRPNVGKS), 56 to 60 (DTAGF), 119 to 122 (NKAE), 236 to 243 (GRPNAGKS), 283 to 287 (DTAGL), and 348 to 351 (SKWD) contribute to the GTP site. The KH-like domain occupies 406–490 (ARAKTGDLNR…PIRLFVRQGK (85 aa)).

Belongs to the TRAFAC class TrmE-Era-EngA-EngB-Septin-like GTPase superfamily. EngA (Der) GTPase family. As to quaternary structure, associates with the 50S ribosomal subunit.

In terms of biological role, GTPase that plays an essential role in the late steps of ribosome biogenesis. This is GTPase Der from Hyphomonas neptunium (strain ATCC 15444).